Here is a 474-residue protein sequence, read N- to C-terminus: Synaptotagmin-15B (474 aa).

Disordered regions lie at residues Met1 to Gly62 and Pro75 to Val128. Residues Pro75 to Pro88 are compositionally biased toward low complexity. 2 consecutive C2 domains span residues Cys200–Ile317 and Glu331–Asp452.

It belongs to the synaptotagmin family.

The chain is Synaptotagmin-15B from Homo sapiens (Human).